The sequence spans 123 residues: Alpha-lactalbumin (123 aa).

The C-type lysozyme domain occupies 1–123 (KQFTKCELSQ…KLEQWLCEEL (123 aa)). Disulfide bonds link cysteine 6-cysteine 120, cysteine 28-cysteine 111, cysteine 61-cysteine 77, and cysteine 73-cysteine 91. Ca(2+) contacts are provided by lysine 79, aspartate 82, aspartate 84, aspartate 87, and aspartate 88.

It belongs to the glycosyl hydrolase 22 family. Lactose synthase (LS) is a heterodimer of a catalytic component, beta1,4-galactosyltransferase (beta4Gal-T1) and a regulatory component, alpha-lactalbumin (LA). In terms of tissue distribution, mammary gland specific. Secreted in milk.

The protein resides in the secreted. Functionally, regulatory subunit of lactose synthase, changes the substrate specificity of galactosyltransferase in the mammary gland making glucose a good acceptor substrate for this enzyme. This enables LS to synthesize lactose, the major carbohydrate component of milk. In other tissues, galactosyltransferase transfers galactose onto the N-acetylglucosamine of the oligosaccharide chains in glycoproteins. In Equus asinus (Donkey), this protein is Alpha-lactalbumin (LALBA).